The sequence spans 434 residues: Sensor histidine kinase Hik2 (434 aa).

Residues 16–152 (ISLCQSQVRL…EAIAKSLAVA (137 aa)) enclose the GAF domain. Cys-19 contacts [3Fe-4S] cluster. The Histidine kinase domain occupies 182–432 (DLLHQLRNPL…TFTLWLRSGE (251 aa)). A Phosphohistidine; by autocatalysis modification is found at His-185. The short motif at 357-361 (DTGYG) is the G1 box element. A G2 box motif is present at residues 386–390 (GTGLG).

Belongs to the chloroplast sensor kinase protein family. In terms of assembly, exists as monomers, tetramers, hexamers and other higher-order oligomers; all are able to autophosphorylate. Upon treatment with 0.5 M NaCl only tetramers are seen, which are probably inactive. Interacts with both RppA and Rre1. Requires [3Fe-4S] cluster as cofactor. Autophosphorylates, probably on His-185.

The protein resides in the cytoplasm. The catalysed reaction is ATP + protein L-histidine = ADP + protein N-phospho-L-histidine.. Its activity is regulated as follows. Autophosphorylation is inhibited by Na(+) but not by Cl(-). Reducing agents dithionite, duroquinol and decyl-plastoquinone, but not NADPH or ferredoxin inhibit autophosphorylation. Oxidation of the Fe-S cluster (with potassium ferricyanide) induces a conformational change that is conducive to its autophosphorylation activity. Member of possibly 2 two-component regulatory system(s) Hik2/Rre1 and Hik2/RppA. Transduces PQ (plastoquinone) redox signals to photosystem gene expression machinery during the adjustment of photosystem stoichiometry. Reduced PQ suppresses its autophosphorylation activity (i.e. kinase activity is higher under oxidizing conditions). Member of two-component regulatory system Hik2/Rre1, controls expression of sigB (sll0306), sll0528, slr1119, slr0852 and ssr3188 in response to hyperosmotic stress. Activity responds to high salt (with a linear response as concentrations rise to 0.5 M NaCl); detects Cl(-) levels. Autophosphorylates and transfers phosphate to Rre1. May transfer phosphate to RppA in a possible Hik2/RppA two-component system. In Synechocystis sp. (strain ATCC 27184 / PCC 6803 / Kazusa), this protein is Sensor histidine kinase Hik2.